Consider the following 883-residue polypeptide: Translation initiation factor IF-2 (883 aa).

A disordered region spans residues 118–261 (VARESEAAPA…KKKEAFKKTE (144 aa)). Residues 124-150 (AAPAEEPVAAAVKPASEPPVVQKAPVA) show a composition bias toward low complexity. Basic and acidic residues-rich tracts occupy residues 183-200 (PADRREATAPKKRIEERI) and 252-261 (KKKEAFKKTE). Residues 383–552 (KRPPVVTIMG…LLQADVMDLK (170 aa)) enclose the tr-type G domain. A G1 region spans residues 392-399 (GHVDHGKT). 392-399 (GHVDHGKT) provides a ligand contact to GTP. The interval 417–421 (GITQH) is G2. Positions 438–441 (DTPG) are G3. GTP is bound by residues 438–442 (DTPGH) and 492–495 (NKID). A G4 region spans residues 492 to 495 (NKID). Residues 528–530 (SAK) form a G5 region.

Belongs to the TRAFAC class translation factor GTPase superfamily. Classic translation factor GTPase family. IF-2 subfamily.

It localises to the cytoplasm. Functionally, one of the essential components for the initiation of protein synthesis. Protects formylmethionyl-tRNA from spontaneous hydrolysis and promotes its binding to the 30S ribosomal subunits. Also involved in the hydrolysis of GTP during the formation of the 70S ribosomal complex. The polypeptide is Translation initiation factor IF-2 (Geobacter sulfurreducens (strain ATCC 51573 / DSM 12127 / PCA)).